A 410-amino-acid chain; its full sequence is O-methyltransferase afvC (410 aa).

Residues 253–254 (GG), Asp-278, 299–300 (DF), and Arg-315 contribute to the S-adenosyl-L-methionine site. Catalysis depends on His-319, which acts as the Proton acceptor.

This sequence belongs to the class I-like SAM-binding methyltransferase superfamily. Cation-independent O-methyltransferase family. COMT subfamily.

The protein operates within secondary metabolite biosynthesis. In terms of biological role, O-methyltransferase; part of the gene cluster that mediates the biosynthesis of aflavarin, a bicoumarin that exhibits anti-insectan activity against the fungivorous beetle C.hemipterus. The polypeptide is O-methyltransferase afvC (Aspergillus flavus (strain ATCC 200026 / FGSC A1120 / IAM 13836 / NRRL 3357 / JCM 12722 / SRRC 167)).